The sequence spans 529 residues: E3 ubiquitin-protein ligase arih1 (529 aa).

Disordered stretches follow at residues 1 to 29 and 46 to 69; these read MDSD…HEDE and ERAG…EEDE. Residues 51-64 show a composition bias toward gly residues; it reads CGEGGGSALGPGPG. Residues 77-125 form a UBA-like region; that stretch reads TAEQILQHMVECIREVNEVIQNPATITRILLSHFNWDKEKLMERYFDGN. Residues 154 to 365 are TRIAD supradomain; it reads LDMPCQICYL…SAWYNCNRYN (212 aa). Zn(2+) contacts are provided by C158, C161, C175, H177, C180, C183, C203, C208, C248, C253, C269, C271, C276, C279, H284, C289, C316, and C319. The RING-type 1 zinc-finger motif lies at 158–208; that stretch reads CQICYLNYPNSYFTGLECGHKFCMQCWGEYLTTKIIEEGMGQTISCPAHGC. An IBR-type zinc finger spans residues 228 to 289; it reads LKYQHLITNS…GENWHDPVKC (62 aa). Residues 316-347 form an RING-type 2; atypical zinc finger; it reads CPKCHVTIEKDGGCNHMVCRNQNCKAEFCWVC. The active site involves C329. Residues C334, C339, C344, C347, H354, and C361 each contribute to the Zn(2+) site. The ariadne domain stretch occupies residues 380–529; sequence RAALQRYLFY…EKDLWEYIED (150 aa).

The protein belongs to the RBR family. Ariadne subfamily. Interacts (via the first RING-type zinc finger) with ube2l3. Associates with cullin-RING ubiquitin ligase (CRL) complexes containing neddylated cullin.

It is found in the cytoplasm. The protein resides in the nucleus. The enzyme catalyses [E2 ubiquitin-conjugating enzyme]-S-ubiquitinyl-L-cysteine + [acceptor protein]-L-lysine = [E2 ubiquitin-conjugating enzyme]-L-cysteine + [acceptor protein]-N(6)-ubiquitinyl-L-lysine.. It participates in protein modification; protein ubiquitination. Its activity is regulated as follows. Autoinhibited by the ariadne domain, which masks the second RING-type zinc finger that contains the active site and inhibits the E3 activity. Inhibition is relieved upon binding to neddylated cullin-RING ubiquitin ligase complexes, which activate the E3 ligase activity of ARIH1. Functionally, E3 ubiquitin-protein ligase, which catalyzes ubiquitination of target proteins together with ubiquitin-conjugating enzyme E2 ube2l3. Acts as an atypical E3 ubiquitin-protein ligase by working together with cullin-RING ubiquitin ligase (CRL) complexes and initiating ubiquitination of CRL substrates: associates with CRL complexes and specifically mediates addition of the first ubiquitin on CRLs targets. The initial ubiquitin is then elongated. E3 ubiquitin-protein ligase activity is activated upon binding to neddylated cullin-RING ubiquitin ligase complexes. This chain is E3 ubiquitin-protein ligase arih1 (arih1), found in Xenopus laevis (African clawed frog).